A 205-amino-acid polypeptide reads, in one-letter code: Heme-binding protein 2 (205 aa).

Positions 1–37 are disordered; sequence MAEEPEPDLGVAEGSEDQALEMPSWKAPEDIDPQPGS. The residue at position 2 (Ala2) is an N-acetylalanine. Ser181 carries the phosphoserine modification.

Belongs to the HEBP family. In terms of assembly, monomer. Interacts with LRPPRC. May interact with BCL2L1; an interaction with BCL2L1 was observed using a peptide, but not with the full-length protein. The full-length protein would have to undergo a major conformation change for the interaction to occur. Interacts with PDCD6.

It is found in the cytoplasm. The protein resides in the mitochondrion. Its function is as follows. Can promote mitochondrial permeability transition and facilitate necrotic cell death under different types of stress conditions. May have low affinity for heme. The protein is Heme-binding protein 2 (Hebp2) of Mus musculus (Mouse).